The chain runs to 326 residues: Adenosine receptor A1 (326 aa).

Residues 1–10 (MPHSVSAFQA) are Extracellular-facing. Residues 11–33 (AYIGIEVLIALVSVPGNVLVIWA) traverse the membrane as a helical segment. Residues 34–46 (VKVNQALRDATFC) are Cytoplasmic-facing. A helical transmembrane segment spans residues 47–69 (FIASLAVADVAVGALVIPLAILI). At 70–80 (NIGPQTYFHTC) the chain is on the extracellular side. An intrachain disulfide couples Cys80 to Cys169. Residues 81-102 (LMVACPVLILTQSSILALLAIA) form a helical membrane-spanning segment. The Cytoplasmic portion of the chain corresponds to 103-123 (VDRYLRVKIPLRYKTVVTPRR). The chain crosses the membrane as a helical span at residues 124–146 (AAVAIAGCWILSLVVGLTPMFGW). At 147–176 (NNLSKIEMAWAANGSVGEPVIKCEFEKVIS) the chain is on the extracellular side. An N-linked (GlcNAc...) asparagine glycan is attached at Asn159. A helical transmembrane segment spans residues 177–201 (MEYMVYFNFFVWVLPPLLLMVLIYL). At 202-235 (EVFYLIRKQLSKKVSASSGDPQKYYGKELKIAKS) the chain is on the cytoplasmic side. A helical transmembrane segment spans residues 236 to 259 (LALILFLFALSWLPLHILNCITLF). Topologically, residues 260 to 267 (CPTCHKPT) are extracellular. The helical transmembrane segment at 268 to 292 (ILTYIAIFLTHGNSAMNPIVYAFRI) threads the bilayer. The Cytoplasmic portion of the chain corresponds to 293–326 (QKFRVTFLKIWNDHFRCQPEPPIDEDLPEEKVDD). Cys309 carries S-palmitoyl cysteine lipidation.

Belongs to the G-protein coupled receptor 1 family.

It localises to the cell membrane. Its function is as follows. Receptor for adenosine. The activity of this receptor is mediated by G proteins which inhibit adenylyl cyclase. The sequence is that of Adenosine receptor A1 (ADORA1) from Cavia porcellus (Guinea pig).